The primary structure comprises 136 residues: Ribosome-binding factor A (136 aa).

It belongs to the RbfA family. Monomer. Binds 30S ribosomal subunits, but not 50S ribosomal subunits or 70S ribosomes.

Its subcellular location is the cytoplasm. In terms of biological role, one of several proteins that assist in the late maturation steps of the functional core of the 30S ribosomal subunit. Associates with free 30S ribosomal subunits (but not with 30S subunits that are part of 70S ribosomes or polysomes). Required for efficient processing of 16S rRNA. May interact with the 5'-terminal helix region of 16S rRNA. The sequence is that of Ribosome-binding factor A from Rhizobium etli (strain ATCC 51251 / DSM 11541 / JCM 21823 / NBRC 15573 / CFN 42).